The primary structure comprises 346 residues: Large ribosomal subunit protein uL1c (346 aa).

Residues 1–70 constitute a chloroplast transit peptide; the sequence is MAACATHSSL…RASNHKFIVS (70 aa). Tyr129 is modified (phosphotyrosine). Thr177 is subject to Phosphothreonine. The residue at position 197 (Ser197) is a Phosphoserine.

It belongs to the universal ribosomal protein uL1 family. Part of the 50S ribosomal subunit.

Its subcellular location is the plastid. The protein resides in the chloroplast. Its function is as follows. This protein binds directly to 23S ribosomal RNA. The sequence is that of Large ribosomal subunit protein uL1c (RPL1) from Arabidopsis thaliana (Mouse-ear cress).